The primary structure comprises 156 residues: Small ribosomal subunit protein uS7 (156 aa).

It belongs to the universal ribosomal protein uS7 family. Part of the 30S ribosomal subunit. Contacts proteins S9 and S11.

One of the primary rRNA binding proteins, it binds directly to 16S rRNA where it nucleates assembly of the head domain of the 30S subunit. Is located at the subunit interface close to the decoding center, probably blocks exit of the E-site tRNA. This is Small ribosomal subunit protein uS7 from Streptococcus pneumoniae (strain Taiwan19F-14).